The sequence spans 130 residues: Spore coat protein M (130 aa).

Its function is as follows. Involved in spore outer coat assembly. May be part of a cross-linked insoluble skeleton that surrounds the spore, serves as a matrix for the assembly of additional outer coat material, and confers structural stability to the final structure. This Bacillus subtilis (strain 168) protein is Spore coat protein M (cotM).